The chain runs to 249 residues: Exosome complex component Rrp41 (249 aa).

Belongs to the RNase PH family. Rrp41 subfamily. As to quaternary structure, component of the archaeal exosome complex. Forms a hexameric ring-like arrangement composed of 3 Rrp41-Rrp42 heterodimers. The hexameric ring associates with a trimer of Rrp4 and/or Csl4 subunits.

The protein localises to the cytoplasm. In terms of biological role, catalytic component of the exosome, which is a complex involved in RNA degradation. Has 3'-&gt;5' exoribonuclease activity. Can also synthesize heteromeric RNA-tails. The protein is Exosome complex component Rrp41 of Pyrococcus horikoshii (strain ATCC 700860 / DSM 12428 / JCM 9974 / NBRC 100139 / OT-3).